A 488-amino-acid chain; its full sequence is Stress activated transcription factor atfs-1 (488 aa).

Residues 1-23 (MFSRVGRLTTFGAQAVSNCPFRR) constitute a mitochondrion transit peptide. Residues 138–191 (SWQNGSSVGHPHGHQQQQQTCQQPPTHSSTTETMHDFSNFGDNMGSPLFQSPSK) are disordered. Residues 142-168 (GSSVGHPHGHQQQQQTCQQPPTHSSTT) are compositionally biased toward low complexity. Lys342 participates in a covalent cross-link: Glycyl lysine isopeptide (Lys-Gly) (interchain with G-Cter in smo-1). The interval 353-400 (QRDDDDEDYIPASEARRTSSRLNRKSATPTYLRRRDSERSWTPASDDY) is disordered. Residues 420–483 (DEETDRRRML…NSMKKELRKM (64 aa)) form the bZIP domain. The tract at residues 425–460 (RRRMLNRIAAVRYREKKRAEKKGRKMEFQEVADRNR) is basic motif. A Nuclear localization signal motif is present at residues 436–441 (RYREKK). The interval 462–469 (LLQKERQL) is leucine-zipper.

It belongs to the bZIP family. In terms of processing, may be desumoylated by ulp-4. As to expression, ubiquitously expressed.

It localises to the mitochondrion matrix. Its subcellular location is the cytoplasm. The protein resides in the nucleus. Its function is as follows. Acts as a transcription factor during mitochondrial stress by activating the mitochondrial unfolded protein response (mtUPR). Induces nuclear and mitochondrial gene transcription, including genes coding for mitochondrial chaperones and proteins involved in glycolysis, amino acid catabolism and innate immunity. Following mitochondrial stress, restores mitochondrial respiratory capacity by limiting the transcription of oxidative phosphorylation (OXPHOS) machinery genes and by promoting the assembly of OXPHOS complexes via the up-regulation of chaperone and assembly factor genes. Component of a feedback loop involving atfs-1, atgl-1 and hlh-11. Acts together with flp-7 to negatively regulate the expression of the transcription regulator hlh-11, to promote expression of atgl-1, and thus atgl-1-dependent fat oxidation in response to mitochondrial stress. In addition, functions with hlh-11 to maintain lifespan. Promotes mtDNA maintenance and propagation of deleterious mtDNA. The sequence is that of Stress activated transcription factor atfs-1 from Caenorhabditis elegans.